Consider the following 116-residue polypeptide: DNA-directed RNA polymerase subunit omega (116 aa).

Belongs to the RNA polymerase subunit omega family. As to quaternary structure, the RNAP catalytic core consists of 2 alpha, 1 beta, 1 beta' and 1 omega subunit. When a sigma factor is associated with the core the holoenzyme is formed, which can initiate transcription.

The enzyme catalyses RNA(n) + a ribonucleoside 5'-triphosphate = RNA(n+1) + diphosphate. Its function is as follows. Promotes RNA polymerase assembly. Latches the N- and C-terminal regions of the beta' subunit thereby facilitating its interaction with the beta and alpha subunits. This is DNA-directed RNA polymerase subunit omega from Hyphomonas neptunium (strain ATCC 15444).